Consider the following 245-residue polypeptide: Geranylgeranylglyceryl phosphate synthase (245 aa).

Positions 22 and 51 each coordinate Mg(2+). Residues 169–175 (YLEAGSG), 200–201 (GG), and 222–223 (GT) each bind sn-glycerol 1-phosphate.

It belongs to the GGGP/HepGP synthase family. Group II subfamily. In terms of assembly, homotetramer. Homohexamer. It depends on Mg(2+) as a cofactor.

It localises to the cytoplasm. The enzyme catalyses sn-glycerol 1-phosphate + (2E,6E,10E)-geranylgeranyl diphosphate = sn-3-O-(geranylgeranyl)glycerol 1-phosphate + diphosphate. The protein operates within membrane lipid metabolism; glycerophospholipid metabolism. In terms of biological role, prenyltransferase that catalyzes the transfer of the geranylgeranyl moiety of geranylgeranyl diphosphate (GGPP) to the C3 hydroxyl of sn-glycerol-1-phosphate (G1P). This reaction is the first ether-bond-formation step in the biosynthesis of archaeal membrane lipids. This chain is Geranylgeranylglyceryl phosphate synthase, found in Methanothermobacter thermautotrophicus (strain ATCC 29096 / DSM 1053 / JCM 10044 / NBRC 100330 / Delta H) (Methanobacterium thermoautotrophicum).